Here is a 730-residue protein sequence, read N- to C-terminus: Synaptotagmin-like protein 5 (730 aa).

The RabBD domain occupies 7 to 123 (FINLSFLLDH…IITGEWFFEE (117 aa)). An FYVE-type zinc finger spans residues 64-106 (CVHCHRNLGLIFDRGDPCQACSLRVCRECRVAGPNGSWKCTVC). Residue serine 147 is modified to Phosphoserine. Disordered stretches follow at residues 147–188 (SPGA…GFLL), 217–271 (QHFR…TRTV), and 294–355 (SQEL…LDKD). 2 stretches are compositionally biased toward polar residues: residues 248 to 271 (PKSS…TRTV) and 305 to 322 (TSGT…SSDQ). C2 domains follow at residues 406-527 (VSGE…DEWF) and 563-694 (PPEQ…VDWM).

In terms of assembly, binds RAB27A that has been activated by GTP-binding, and possibly also RAB3A and RAB6A. Highly expressed in placenta and liver.

Its subcellular location is the membrane. In terms of biological role, may act as Rab effector protein and play a role in vesicle trafficking. Binds phospholipids. The polypeptide is Synaptotagmin-like protein 5 (SYTL5) (Homo sapiens (Human)).